The following is a 63-amino-acid chain: Kappa-theraphotoxin-Gr3a (63 aa).

An N-terminal signal peptide occupies residues 1–21 (MKTSVFVLVLGLVLLFAVSFA). Positions 22–29 (TEMEESAR) are excised as a propeptide. Cystine bridges form between cysteine 31/cysteine 45, cysteine 38/cysteine 50, and cysteine 44/cysteine 57.

This sequence belongs to the neurotoxin 10 (Hwtx-1) family. 63 (VsTx1) subfamily. In terms of tissue distribution, expressed by the venom gland.

Its subcellular location is the secreted. Inhibits sodium channels Nav1.7/SCN9A and potassium channels Kv11.1/KCNH2. Also binds the voltage-sensor domain of the potassium channel KvAP (from the archaeon Aeropyrum pernix) with very slow apparent binding kinetics and affects channel gating. Reaches its target by dynamically partitioning into anionic or zwitterionic headgroup lipid membranes. May bind to the open state of KvAP. This is Kappa-theraphotoxin-Gr3a from Grammostola rosea (Chilean rose tarantula).